The following is a 279-amino-acid chain: Large ribosomal subunit protein uL2 (279 aa).

Disordered stretches follow at residues 29–49 (PVKQ…NGRV) and 202–279 (NASI…KKKG). Over residues 36 to 49 (GKSSSGGRNNNGRV) the composition is skewed to low complexity. Over residues 209-220 (GRSRWLGRRPHN) the composition is skewed to basic residues.

Belongs to the universal ribosomal protein uL2 family. As to quaternary structure, part of the 50S ribosomal subunit. Forms a bridge to the 30S subunit in the 70S ribosome.

In terms of biological role, one of the primary rRNA binding proteins. Required for association of the 30S and 50S subunits to form the 70S ribosome, for tRNA binding and peptide bond formation. It has been suggested to have peptidyltransferase activity; this is somewhat controversial. Makes several contacts with the 16S rRNA in the 70S ribosome. This Beijerinckia indica subsp. indica (strain ATCC 9039 / DSM 1715 / NCIMB 8712) protein is Large ribosomal subunit protein uL2.